A 376-amino-acid polypeptide reads, in one-letter code: Chaperone protein DnaJ (376 aa).

The J domain maps to 5–70 (DYYEVLGVGR…DKKAAYDQFG (66 aa)). Residues 132–210 (GLTKELRIPT…CHGEGRVEKS (79 aa)) form a CR-type zinc finger. The Zn(2+) site is built by Cys145, Cys148, Cys162, Cys165, Cys184, Cys187, Cys198, and Cys201. 4 CXXCXGXG motif repeats span residues 145 to 152 (CDLCDGSG), 162 to 169 (CGTCHGQG), 184 to 191 (CPTCHGRG), and 198 to 205 (CGKCHGEG).

The protein belongs to the DnaJ family. As to quaternary structure, homodimer. It depends on Zn(2+) as a cofactor.

The protein resides in the cytoplasm. In terms of biological role, participates actively in the response to hyperosmotic and heat shock by preventing the aggregation of stress-denatured proteins and by disaggregating proteins, also in an autonomous, DnaK-independent fashion. Unfolded proteins bind initially to DnaJ; upon interaction with the DnaJ-bound protein, DnaK hydrolyzes its bound ATP, resulting in the formation of a stable complex. GrpE releases ADP from DnaK; ATP binding to DnaK triggers the release of the substrate protein, thus completing the reaction cycle. Several rounds of ATP-dependent interactions between DnaJ, DnaK and GrpE are required for fully efficient folding. Also involved, together with DnaK and GrpE, in the DNA replication of plasmids through activation of initiation proteins. The polypeptide is Chaperone protein DnaJ (Shewanella frigidimarina (strain NCIMB 400)).